The sequence spans 326 residues: Putative nickel insertion protein (326 aa).

It belongs to the LarC family.

The sequence is that of Putative nickel insertion protein from Enterococcus faecalis (strain ATCC 700802 / V583).